The chain runs to 302 residues: Glycine--tRNA ligase alpha subunit (302 aa).

This sequence belongs to the class-II aminoacyl-tRNA synthetase family. As to quaternary structure, tetramer of two alpha and two beta subunits.

It is found in the cytoplasm. The catalysed reaction is tRNA(Gly) + glycine + ATP = glycyl-tRNA(Gly) + AMP + diphosphate. This chain is Glycine--tRNA ligase alpha subunit (glyQ), found in Haemophilus influenzae (strain ATCC 51907 / DSM 11121 / KW20 / Rd).